Reading from the N-terminus, the 530-residue chain is Autoinducer-2 kinase (530 aa).

Belongs to the FGGY kinase family.

The protein resides in the cytoplasm. The enzyme catalyses (S)-4,5-dihydroxypentane-2,3-dione + ATP = (2S)-2-hydroxy-3,4-dioxopentyl phosphate + ADP + H(+). In terms of biological role, catalyzes the phosphorylation of autoinducer-2 (AI-2) to phospho-AI-2, which subsequently inactivates the transcriptional regulator LsrR and leads to the transcription of the lsr operon. Phosphorylates the ring-open form of (S)-4,5-dihydroxypentane-2,3-dione (DPD), which is the precursor to all AI-2 signaling molecules, at the C5 position. In Yersinia pseudotuberculosis serotype O:3 (strain YPIII), this protein is Autoinducer-2 kinase.